The following is a 336-amino-acid chain: Serpentine receptor class beta-15 (336 aa).

7 helical membrane-spanning segments follow: residues 24-44 (LFIHLFVSISSIIPLIYFVIF), 57-77 (FLFSAYFVSVFLFSVDFAIIS), 109-129 (IFMSLSTFFPISITIERFIAM), 142-162 (LGPILTGCNILLDLLIVFFIY), 186-206 (FTFFWVMFFLNLINFTFNSYL), 237-257 (VFVVFCHVILFGFYVIGIMIL), and 276-296 (GAFTTMISLYNLVVGSVAVYL).

It belongs to the nematode receptor-like protein srb family.

It localises to the membrane. This chain is Serpentine receptor class beta-15 (srb-15), found in Caenorhabditis elegans.